The primary structure comprises 616 residues: Mitochondrial Rho GTPase 2 (616 aa).

Residues 1–590 are Cytoplasmic-facing; sequence MKRDVRILLL…HDTELSTASF (590 aa). The Miro 1 domain occupies 2-168; sequence KRDVRILLLG…FYYAQKAVLH (167 aa). GTP contacts are provided by Gly16, Lys17, Thr18, and Ser19. A Mg(2+)-binding site is contributed by Thr18. Residue Asp57 coordinates Mg(2+). Residues Ser59, Asn118, Lys119, Asp121, Ala149, and Lys150 each coordinate GTP. 2 EF-hand domains span residues 184 to 219 and 304 to 339; these read QCKK…CFGN and FGYQ…FPYT. Asp199, Asn201, Glu208, Asp317, Asp319, Asp321, and Glu328 together coordinate Ca(2+). Positions 416–577 constitute a Miro 2 domain; it reads RNVFLCRVIG…YSKLATAAAF (162 aa). The GTP site is built by Gly428, Gly430, Lys431, Ser432, and Ala433. Position 432 (Ser432) interacts with Mg(2+). Residue Glu474 participates in Mg(2+) binding. GTP is bound by residues Lys528, Asp530, and Cys559. Residues 591 to 613 form a helical; Anchor for type IV membrane protein membrane-spanning segment; it reads WLRVALGATVAAVVGFTLYKALL. Residues 614 to 616 lie on the Mitochondrial intermembrane side of the membrane; it reads RSK.

The protein belongs to the mitochondrial Rho GTPase family. Homodimer.

The protein resides in the mitochondrion outer membrane. The enzyme catalyses GTP + H2O = GDP + phosphate + H(+). It catalyses the reaction ATP + H2O = ADP + phosphate + H(+). It carries out the reaction UTP + H2O = UDP + phosphate + H(+). Its function is as follows. Atypical mitochondrial nucleoside-triphosphatase (NTPase) involved in mitochondrial trafficking. Probably involved in control of anterograde transport of mitochondria and their subcellular distribution. Can hydrolyze GTP, ATP and UTP. In Xenopus tropicalis (Western clawed frog), this protein is Mitochondrial Rho GTPase 2 (rhot2).